Consider the following 142-residue polypeptide: Galactose-6-phosphate isomerase subunit LacA (142 aa).

Belongs to the LacAB/RpiB family. As to quaternary structure, heteromultimeric protein consisting of LacA and LacB.

It catalyses the reaction aldehydo-D-galactose 6-phosphate = keto-D-tagatose 6-phosphate. The protein operates within carbohydrate metabolism; D-galactose 6-phosphate degradation; D-tagatose 6-phosphate from D-galactose 6-phosphate: step 1/1. The protein is Galactose-6-phosphate isomerase subunit LacA of Staphylococcus aureus.